Here is a 290-residue protein sequence, read N- to C-terminus: Putative phosphatase MPN_427 (290 aa).

The Nucleophile role is filled by aspartate 16. Aspartate 16 is a binding site for Mg(2+). Leucine 17 lines the phosphate pocket. Aspartate 18 serves as a coordination point for Mg(2+). Phosphate is bound by residues 53–54 (TG) and lysine 216. Residues aspartate 239 and serine 240 each coordinate Mg(2+). Asparagine 242 is a phosphate binding site.

Belongs to the HAD-like hydrolase superfamily. Cof family. Mg(2+) is required as a cofactor.

In Mycoplasma pneumoniae (strain ATCC 29342 / M129 / Subtype 1) (Mycoplasmoides pneumoniae), this protein is Putative phosphatase MPN_427.